The sequence spans 481 residues: Proline--tRNA ligase (481 aa).

Belongs to the class-II aminoacyl-tRNA synthetase family. ProS type 3 subfamily. In terms of assembly, homodimer.

It is found in the cytoplasm. The catalysed reaction is tRNA(Pro) + L-proline + ATP = L-prolyl-tRNA(Pro) + AMP + diphosphate. Functionally, catalyzes the attachment of proline to tRNA(Pro) in a two-step reaction: proline is first activated by ATP to form Pro-AMP and then transferred to the acceptor end of tRNA(Pro). The sequence is that of Proline--tRNA ligase from Chlorobium limicola (strain DSM 245 / NBRC 103803 / 6330).